The following is a 314-amino-acid chain: Polyadenylate-binding protein-interacting protein 8 (314 aa).

A disordered region spans residues 1–47 (MAAITEMATDSNDVINDGGTGDGIEKSTDSKPEIESDDLKPKSKPEY). Residues 23 to 47 (GIEKSTDSKPEIESDDLKPKSKPEY) show a composition bias toward basic and acidic residues. The PAM2-like motif lies at 59–69 (KLNPEAKEFFP). A Bipartite nuclear localization signal motif is present at residues 99-112 (RRRRNNYNQGRRVR). RRM domains are found at residues 128 to 203 (RTVY…PSKT) and 225 to 301 (RTIY…PSKT).

Interacts with MPC. As to expression, expressed in cauline leaves, stems, rosette leaves, immature siliques and primary inflorescences but at a low level.

It is found in the nucleus. This is Polyadenylate-binding protein-interacting protein 8 (CID8) from Arabidopsis thaliana (Mouse-ear cress).